Reading from the N-terminus, the 245-residue chain is Carbohydrate deacetylase 1 (245 aa).

His-59 and His-125 together coordinate Mg(2+).

It belongs to the YdjC deacetylase family. In terms of assembly, homodimer. The cofactor is Mg(2+).

Probably catalyzes the deacetylation of acetylated carbohydrates an important step in the degradation of oligosaccharides. The chain is Carbohydrate deacetylase 1 from Listeria innocua serovar 6a (strain ATCC BAA-680 / CLIP 11262).